We begin with the raw amino-acid sequence, 316 residues long: Methionyl-tRNA formyltransferase (316 aa).

112–115 is a binding site for (6S)-5,6,7,8-tetrahydrofolate; that stretch reads SLLP.

Belongs to the Fmt family.

The enzyme catalyses L-methionyl-tRNA(fMet) + (6R)-10-formyltetrahydrofolate = N-formyl-L-methionyl-tRNA(fMet) + (6S)-5,6,7,8-tetrahydrofolate + H(+). Attaches a formyl group to the free amino group of methionyl-tRNA(fMet). The formyl group appears to play a dual role in the initiator identity of N-formylmethionyl-tRNA by promoting its recognition by IF2 and preventing the misappropriation of this tRNA by the elongation apparatus. This Actinobacillus pleuropneumoniae serotype 5b (strain L20) protein is Methionyl-tRNA formyltransferase.